The primary structure comprises 365 residues: Spermidine-binding periplasmic protein SpuE (365 aa).

The signal sequence occupies residues 1-24; that stretch reads MQHSIGKTLLVAALATAIAGPVQA. Positions 35, 181, 242, and 269 each coordinate spermidine.

It belongs to the bacterial solute-binding protein PotD/PotF family.

The protein localises to the periplasm. Functionally, spermidine-binding protein probably required for its uptake into cells. Binds spermidine with high affinity (KD=14.3 nM). Does not bind putrescine, cadaverine or spermine. Spermidine binding induces large inter-domain conformational changes. Implicated in induction of type 3 secretion systems (T3SS), which play a role in virulence. The sequence is that of Spermidine-binding periplasmic protein SpuE (spuE) from Pseudomonas aeruginosa (strain ATCC 15692 / DSM 22644 / CIP 104116 / JCM 14847 / LMG 12228 / 1C / PRS 101 / PAO1).